A 341-amino-acid polypeptide reads, in one-letter code: Glyceraldehyde-3-phosphate dehydrogenase (341 aa).

Residues 11-12 (TI) and Gly109 each bind NAD(+). 138–140 (SCN) provides a ligand contact to D-glyceraldehyde 3-phosphate. Cys139 (nucleophile) is an active-site residue. Arg167 is a binding site for NAD(+). Residues Thr169 and 192-193 (HA) contribute to the D-glyceraldehyde 3-phosphate site. Gln299 is an NAD(+) binding site.

Belongs to the glyceraldehyde-3-phosphate dehydrogenase family. In terms of assembly, homotetramer.

It localises to the cytoplasm. The catalysed reaction is D-glyceraldehyde 3-phosphate + phosphate + NADP(+) = (2R)-3-phospho-glyceroyl phosphate + NADPH + H(+). It carries out the reaction D-glyceraldehyde 3-phosphate + phosphate + NAD(+) = (2R)-3-phospho-glyceroyl phosphate + NADH + H(+). It participates in carbohydrate degradation; glycolysis; pyruvate from D-glyceraldehyde 3-phosphate: step 1/5. The polypeptide is Glyceraldehyde-3-phosphate dehydrogenase (Picrophilus torridus (strain ATCC 700027 / DSM 9790 / JCM 10055 / NBRC 100828 / KAW 2/3)).